Here is a 242-residue protein sequence, read N- to C-terminus: Purine nucleoside phosphorylase PA4543 (242 aa).

3 residues coordinate Zn(2+): H69, C103, and H120.

Belongs to the purine nucleoside phosphorylase YfiH/LACC1 family. Homodimer. Cu(2+) serves as cofactor. Zn(2+) is required as a cofactor.

The catalysed reaction is adenosine + phosphate = alpha-D-ribose 1-phosphate + adenine. It catalyses the reaction S-methyl-5'-thioadenosine + phosphate = 5-(methylsulfanyl)-alpha-D-ribose 1-phosphate + adenine. It carries out the reaction inosine + phosphate = alpha-D-ribose 1-phosphate + hypoxanthine. The enzyme catalyses adenosine + H2O + H(+) = inosine + NH4(+). Functionally, purine nucleoside enzyme that catalyzes the phosphorolysis of adenosine and inosine nucleosides, yielding D-ribose 1-phosphate and the respective free bases, adenine and hypoxanthine. Also catalyzes the phosphorolysis of S-methyl-5'-thioadenosine into adenine and S-methyl-5-thio-alpha-D-ribose 1-phosphate. Also has adenosine deaminase activity. The polypeptide is Purine nucleoside phosphorylase PA4543 (Pseudomonas aeruginosa (strain ATCC 15692 / DSM 22644 / CIP 104116 / JCM 14847 / LMG 12228 / 1C / PRS 101 / PAO1)).